Reading from the N-terminus, the 130-residue chain is Ribosome-binding factor A (130 aa).

A disordered region spans residues 111-130 (RDLDDVGPGATSSDEDAEQR).

Belongs to the RbfA family. Monomer. Binds 30S ribosomal subunits, but not 50S ribosomal subunits or 70S ribosomes.

Its subcellular location is the cytoplasm. Functionally, one of several proteins that assist in the late maturation steps of the functional core of the 30S ribosomal subunit. Associates with free 30S ribosomal subunits (but not with 30S subunits that are part of 70S ribosomes or polysomes). Required for efficient processing of 16S rRNA. May interact with the 5'-terminal helix region of 16S rRNA. This chain is Ribosome-binding factor A, found in Xanthomonas oryzae pv. oryzae (strain MAFF 311018).